We begin with the raw amino-acid sequence, 604 residues long: Complement factor I (604 aa).

Residues 1–18 (MKLALLILLLLNPHLSSS) form the signal peptide. Cystine bridges form between C36/C260, C46/C57, C51/C62, C64/C96, C70/C89, C78/C109, C144/C186, C157/C219, C191/C201, C234/C252, C246/C261, C264/C276, C271/C289, C283/C298, C349/C474, C387/C403, C395/C465, C488/C552, C516/C531, and C542/C571. An N-linked (GlcNAc...) asparagine glycan is attached at N40. A Kazal-like domain is found at 58–111 (IEGTCACKLPYQCPKAGTPVCATNGRGYPTYCHLKSFECLHPEIKFSNNGTCTA). N106, N116, and N182 each carry an N-linked (GlcNAc...) asparagine glycan. An SRCR domain is found at 117 to 217 (VSLIYGSTDT…SKAPHGLAGV (101 aa)). LDL-receptor class A domains are found at residues 218 to 262 (VCYT…LCCK) and 263 to 299 (GCRG…SGCE). Ca(2+) is bound by residues K244, D247, V249, D251, D257, and E258. Positions 284, 286, 288, 294, and 295 each coordinate Ca(2+). The region spanning 362–595 (VVGGKPAEMG…YFDWISYYVG (234 aa)) is the Peptidase S1 domain. Catalysis depends on charge relay system residues H402 and D450. N515 carries N-linked (GlcNAc...) asparagine glycosylation. S546 functions as the Charge relay system in the catalytic mechanism. An N-linked (GlcNAc...) asparagine glycan is attached at N557.

The protein belongs to the peptidase S1 family. Heterodimer of a light and heavy chains; disulfide-linked. The fully processed and mature protein circulates as a zymogen, and is allosterically activated by substrate-induced remodeling of the active site. Interacts with C3b. Interacts with complement factor H. Expressed in the liver by hepatocytes. Also present in other cells such as monocytes, fibroblasts or keratinocytes.

It is found in the secreted. Its subcellular location is the extracellular space. It carries out the reaction Inactivates complement subcomponents C3b, iC3b and C4b by proteolytic cleavage.. Its function is as follows. Trypsin-like serine protease that plays an essential role in regulating the immune response by controlling all complement pathways. Inhibits these pathways by cleaving three peptide bonds in the alpha-chain of C3b and two bonds in the alpha-chain of C4b thereby inactivating these proteins. Essential cofactors for these reactions include factor H and C4BP in the fluid phase and membrane cofactor protein/CD46 and CR1 on cell surfaces. The presence of these cofactors on healthy cells allows degradation of deposited C3b by CFI in order to prevent undesired complement activation, while in apoptotic cells or microbes, the absence of such cofactors leads to C3b-mediated complement activation and subsequent opsonization. This chain is Complement factor I (Cfi), found in Rattus norvegicus (Rat).